Consider the following 106-residue polypeptide: Large ribosomal subunit protein uL24 (106 aa).

Belongs to the universal ribosomal protein uL24 family. As to quaternary structure, part of the 50S ribosomal subunit.

One of two assembly initiator proteins, it binds directly to the 5'-end of the 23S rRNA, where it nucleates assembly of the 50S subunit. Functionally, one of the proteins that surrounds the polypeptide exit tunnel on the outside of the subunit. This Acidithiobacillus ferrooxidans (strain ATCC 53993 / BNL-5-31) (Leptospirillum ferrooxidans (ATCC 53993)) protein is Large ribosomal subunit protein uL24.